The primary structure comprises 462 residues: UDP-N-acetylmuramoylalanine--D-glutamate ligase (462 aa).

Residue 125–131 coordinates ATP; that stretch reads GSDGKTT.

It belongs to the MurCDEF family.

Its subcellular location is the cytoplasm. The enzyme catalyses UDP-N-acetyl-alpha-D-muramoyl-L-alanine + D-glutamate + ATP = UDP-N-acetyl-alpha-D-muramoyl-L-alanyl-D-glutamate + ADP + phosphate + H(+). Its pathway is cell wall biogenesis; peptidoglycan biosynthesis. Its function is as follows. Cell wall formation. Catalyzes the addition of glutamate to the nucleotide precursor UDP-N-acetylmuramoyl-L-alanine (UMA). This chain is UDP-N-acetylmuramoylalanine--D-glutamate ligase, found in Clostridium acetobutylicum (strain ATCC 824 / DSM 792 / JCM 1419 / IAM 19013 / LMG 5710 / NBRC 13948 / NRRL B-527 / VKM B-1787 / 2291 / W).